The sequence spans 486 residues: Glucose-6-phosphate 1-dehydrogenase (486 aa).

NADP(+) is bound by residues 13 to 20 (GGTGDLAK), R47, 86 to 87 (DV), and K149. Substrate-binding residues include H179, K183, E217, and D236. H241 (proton acceptor) is an active-site residue. K339 and K344 together coordinate substrate.

This sequence belongs to the glucose-6-phosphate dehydrogenase family. As to quaternary structure, homodimer.

The enzyme catalyses D-glucose 6-phosphate + NAD(+) = 6-phospho-D-glucono-1,5-lactone + NADH + H(+). It catalyses the reaction D-glucose 6-phosphate + NADP(+) = 6-phospho-D-glucono-1,5-lactone + NADPH + H(+). It participates in carbohydrate degradation; pentose phosphate pathway; D-ribulose 5-phosphate from D-glucose 6-phosphate (oxidative stage): step 1/3. Functionally, catalyzes the oxidation of glucose 6-phosphate to 6-phosphogluconolactone. Can utilize either NADP(+) or NAD(+). This is Glucose-6-phosphate 1-dehydrogenase from Leuconostoc mesenteroides.